Here is a 179-residue protein sequence, read N- to C-terminus: Large ribosomal subunit protein uL5 (179 aa).

Belongs to the universal ribosomal protein uL5 family. Part of the 50S ribosomal subunit; part of the 5S rRNA/L5/L18/L25 subcomplex. Contacts the 5S rRNA and the P site tRNA. Forms a bridge to the 30S subunit in the 70S ribosome.

This is one of the proteins that bind and probably mediate the attachment of the 5S RNA into the large ribosomal subunit, where it forms part of the central protuberance. In the 70S ribosome it contacts protein S13 of the 30S subunit (bridge B1b), connecting the 2 subunits; this bridge is implicated in subunit movement. Contacts the P site tRNA; the 5S rRNA and some of its associated proteins might help stabilize positioning of ribosome-bound tRNAs. This is Large ribosomal subunit protein uL5 from Enterococcus faecalis (strain ATCC 700802 / V583).